Consider the following 495-residue polypeptide: ATP synthase subunit beta, chloroplastic (495 aa).

Position 172–179 (172–179 (GGAGVGKT)) interacts with ATP.

Belongs to the ATPase alpha/beta chains family. As to quaternary structure, F-type ATPases have 2 components, CF(1) - the catalytic core - and CF(0) - the membrane proton channel. CF(1) has five subunits: alpha(3), beta(3), gamma(1), delta(1), epsilon(1). CF(0) has four main subunits: a(1), b(1), b'(1) and c(9-12).

It localises to the plastid. The protein localises to the chloroplast thylakoid membrane. It carries out the reaction ATP + H2O + 4 H(+)(in) = ADP + phosphate + 5 H(+)(out). In terms of biological role, produces ATP from ADP in the presence of a proton gradient across the membrane. The catalytic sites are hosted primarily by the beta subunits. The sequence is that of ATP synthase subunit beta, chloroplastic from Bowiea volubilis (Climbing onion).